We begin with the raw amino-acid sequence, 482 residues long: tRNA sulfurtransferase (482 aa).

One can recognise a THUMP domain in the interval 61 to 165; it reads QQVLEILTTT…DDKLNQILAH (105 aa). ATP contacts are provided by residues 183-184, K265, G287, and Q296; that span reads LI. C344 and C456 are disulfide-bonded. In terms of domain architecture, Rhodanese spans 404–482; the sequence is IEEHAVVLDI…GFNNVKVYRP (79 aa). Catalysis depends on C456, which acts as the Cysteine persulfide intermediate.

This sequence belongs to the ThiI family.

Its subcellular location is the cytoplasm. The enzyme catalyses [ThiI sulfur-carrier protein]-S-sulfanyl-L-cysteine + a uridine in tRNA + 2 reduced [2Fe-2S]-[ferredoxin] + ATP + H(+) = [ThiI sulfur-carrier protein]-L-cysteine + a 4-thiouridine in tRNA + 2 oxidized [2Fe-2S]-[ferredoxin] + AMP + diphosphate. It catalyses the reaction [ThiS sulfur-carrier protein]-C-terminal Gly-Gly-AMP + S-sulfanyl-L-cysteinyl-[cysteine desulfurase] + AH2 = [ThiS sulfur-carrier protein]-C-terminal-Gly-aminoethanethioate + L-cysteinyl-[cysteine desulfurase] + A + AMP + 2 H(+). It functions in the pathway cofactor biosynthesis; thiamine diphosphate biosynthesis. Its function is as follows. Catalyzes the ATP-dependent transfer of a sulfur to tRNA to produce 4-thiouridine in position 8 of tRNAs, which functions as a near-UV photosensor. Also catalyzes the transfer of sulfur to the sulfur carrier protein ThiS, forming ThiS-thiocarboxylate. This is a step in the synthesis of thiazole, in the thiamine biosynthesis pathway. The sulfur is donated as persulfide by IscS. This is tRNA sulfurtransferase from Vibrio vulnificus (strain CMCP6).